We begin with the raw amino-acid sequence, 716 residues long: DNA ligase (716 aa).

Residues 50-54, 99-100, and glutamate 132 each bind NAD(+); these read DAEYD and SL. Lysine 134 (N6-AMP-lysine intermediate) is an active-site residue. Residues arginine 155, glutamate 192, lysine 308, and lysine 332 each coordinate NAD(+). The Zn(2+) site is built by cysteine 437, cysteine 439, cysteine 461, and cysteine 467. The BRCT domain occupies 638–716; the sequence is KSNSAVAGKT…EDEWLKLIGE (79 aa).

This sequence belongs to the NAD-dependent DNA ligase family. LigA subfamily. Requires Mg(2+) as cofactor. The cofactor is Mn(2+).

The enzyme catalyses NAD(+) + (deoxyribonucleotide)n-3'-hydroxyl + 5'-phospho-(deoxyribonucleotide)m = (deoxyribonucleotide)n+m + AMP + beta-nicotinamide D-nucleotide.. DNA ligase that catalyzes the formation of phosphodiester linkages between 5'-phosphoryl and 3'-hydroxyl groups in double-stranded DNA using NAD as a coenzyme and as the energy source for the reaction. It is essential for DNA replication and repair of damaged DNA. This is DNA ligase from Bradyrhizobium diazoefficiens (strain JCM 10833 / BCRC 13528 / IAM 13628 / NBRC 14792 / USDA 110).